A 101-amino-acid polypeptide reads, in one-letter code: Floral defensin-like protein 2 (101 aa).

The N-terminal stretch at 1 to 25 (MARSICFFAVAILALMLFAAYETEA) is a signal peptide. Intrachain disulfides connect C28–C74, C32–C48, C39–C61, C45–C68, and C49–C70. Residues 75–101 (ATEEATATLANEVKTMAEALVEEDMME) constitute a propeptide, removed in mature form.

Belongs to the DEFL family. When compared to other plant defensins, the petunia defensins have an additional fifth disulfide bond. As to expression, petals.

Its subcellular location is the secreted. The protein localises to the vacuole. Plant defense peptide with antifungal activity against F.oxysporum and B.cinerea. The sequence is that of Floral defensin-like protein 2 (D2) from Petunia hybrida (Petunia).